Consider the following 690-residue polypeptide: MATNDLFPPEPPLPDPAHVAQLRRALHEHAHHYYVEDAPTIPDAEYDRMFQELQAIEAQHPELITPDSPTQRVGGRALEQFASVRHAVPMLSIRTETDTEASGARNFDTRVRRELGLDEAAPAVAYVAEPKFDGLAMNLRYESGILVQAATRGDGEVGEDVTQNVRTIGQIPLRLPADAPSILEVRGEVYMRRDDFEKLNEQQRARGQKTFVNPRNAAAGAVRQLDPAIAAQRPLSFFAYGLGEVTPEQAGGPAFGTHYELLQALKTWGFPVSALVGLAQGATELVAYYESIARQRDALPFDIDGVVYKVNSLALQRRMGFVTREPRWAVAHKFPAQEQFTTVLDIDVQVGRTGKLTPVAKLAPVFVGGVTVTNATLHNEDEARRKDVRVGDTVIVRRAGDVIPEVVSVLLDKRQPGATEFTMPRQCPVCGSAAVREEGEVDYRCTGGLFCSAQRKQAILHFAQRRAVEVEGLGEKLVDQLVDGHVIRILPDLYRLGLTALASLDRMADKSAQNILQALEKSKQTTLPRFLFGLGIRHVGEATAKELARHFGSLDAVMDASLEQLLQVNDIGPIVAQSLRTFFDQPHNREVVEQLRACGVTWQEGPPAPVTPTPLSGKTFVITGTLPSMSRDEAKDLIEAAGGKVAGSVSKKTTFVVAGTEAGSKLTKAQELGVAVLDEAGLKELLDGHS.

NAD(+)-binding positions include 43–47 (DAEYD), 92–93 (SI), and Glu-129. Lys-131 acts as the N6-AMP-lysine intermediate in catalysis. Residues Arg-152, Glu-188, Lys-309, and Lys-333 each coordinate NAD(+). The Zn(2+) site is built by Cys-427, Cys-430, Cys-445, and Cys-451. Positions 610–690 (VTPTPLSGKT…GLKELLDGHS (81 aa)) constitute a BRCT domain.

It belongs to the NAD-dependent DNA ligase family. LigA subfamily. Mg(2+) serves as cofactor. Mn(2+) is required as a cofactor.

It catalyses the reaction NAD(+) + (deoxyribonucleotide)n-3'-hydroxyl + 5'-phospho-(deoxyribonucleotide)m = (deoxyribonucleotide)n+m + AMP + beta-nicotinamide D-nucleotide.. Functionally, DNA ligase that catalyzes the formation of phosphodiester linkages between 5'-phosphoryl and 3'-hydroxyl groups in double-stranded DNA using NAD as a coenzyme and as the energy source for the reaction. It is essential for DNA replication and repair of damaged DNA. The polypeptide is DNA ligase (Albidiferax ferrireducens (strain ATCC BAA-621 / DSM 15236 / T118) (Rhodoferax ferrireducens)).